The chain runs to 293 residues: Diaminopimelate epimerase (293 aa).

3 residues coordinate substrate: Asn17, Gln47, and Asn67. Cys76 (proton donor) is an active-site residue. Substrate contacts are provided by residues 77–78, Asn164, Asn197, and 215–216; these read GN and ER. The active-site Proton acceptor is Cys224. Residue 225–226 coordinates substrate; the sequence is GS.

This sequence belongs to the diaminopimelate epimerase family. In terms of assembly, homodimer.

The protein localises to the cytoplasm. The enzyme catalyses (2S,6S)-2,6-diaminopimelate = meso-2,6-diaminopimelate. Its pathway is amino-acid biosynthesis; L-lysine biosynthesis via DAP pathway; DL-2,6-diaminopimelate from LL-2,6-diaminopimelate: step 1/1. Catalyzes the stereoinversion of LL-2,6-diaminopimelate (L,L-DAP) to meso-diaminopimelate (meso-DAP), a precursor of L-lysine and an essential component of the bacterial peptidoglycan. This is Diaminopimelate epimerase from Rhodopseudomonas palustris (strain ATCC BAA-98 / CGA009).